The primary structure comprises 967 residues: Sarcosine oxidase subunit alpha (967 aa).

NAD(+) is bound by residues Ala-141, Asp-160, Glu-161, Arg-162, Ser-168, Val-207, Ala-420, and Thr-427. Residues Thr-694 and Glu-786 each coordinate (6R)-5,10-methylene-5,6,7,8-tetrahydrofolate.

Belongs to the GcvT family. In terms of assembly, heterotetramer composed of subunits alpha (SoxA), beta (SoxB), gamma (SoxG) and delta (SoxD). NAD(+) is required as a cofactor.

It localises to the cytoplasm. It carries out the reaction sarcosine + (6S)-5,6,7,8-tetrahydrofolate + O2 = (6R)-5,10-methylene-5,6,7,8-tetrahydrofolate + glycine + H2O2. The catalysed reaction is sarcosine + O2 + H2O = formaldehyde + glycine + H2O2. In the presence of tetrahydrofolate, catalyzes the oxidative demethylation of sarcosine to yield glycine, 5,10-methylenetetrahydrofolate and hydrogen peroxide. In the absence of tetrahydrofolate, catalyzes the oxidative demethylation of sarcosine to yield glycine, formaldehyde and hydrogen peroxide. The chain is Sarcosine oxidase subunit alpha from Corynebacterium sp. (strain P-1).